The sequence spans 62 residues: Cytotoxin homolog (62 aa).

4 cysteine pairs are disulfide-bonded: Cys-3–Cys-22, Cys-15–Cys-40, Cys-44–Cys-55, and Cys-56–Cys-61.

The protein belongs to the three-finger toxin family. Short-chain subfamily. Orphan group XV sub-subfamily. As to expression, expressed by the venom gland.

Its subcellular location is the secreted. It is found in the target cell membrane. In terms of biological role, has low cytotoxic activity. The sequence is that of Cytotoxin homolog from Naja kaouthia (Monocled cobra).